A 199-amino-acid polypeptide reads, in one-letter code: Putative lectin L633 (199 aa).

Residues 1–25 (MNILLLLMLLTSIILLVILIFLAYN) form the signal peptide. The span at 35–48 (CITPAPESQSISPD) shows a compositional bias: polar residues. Positions 35–74 (CITPAPESQSISPDQTTQLQTTTPVTSTPSNPTPTTIIPN) are disordered. The segment covering 49-73 (QTTQLQTTTPVTSTPSNPTPTTIIP) has biased composition (low complexity). The Bulb-type lectin domain maps to 84-195 (EIVSNGDNVL…LGQELWCATR (112 aa)). An N-linked (GlcNAc...) asparagine; by host glycan is attached at Asn-121.

The protein resides in the secreted. The polypeptide is Putative lectin L633 (Acanthamoeba polyphaga (Amoeba)).